The chain runs to 305 residues: Tyrosine recombinase XerC (305 aa).

Positions 1-84 constitute a Core-binding (CB) domain; that stretch reads MNEVFESYLT…TLRGFYKYAL (84 aa). Positions 105–299 constitute a Tyr recombinase domain; sequence KLPVFMFPKQ…TAEQLQNLYK (195 aa). Catalysis depends on residues arginine 146, lysine 170, histidine 251, arginine 254, and histidine 277. Tyrosine 286 functions as the O-(3'-phospho-DNA)-tyrosine intermediate in the catalytic mechanism.

This sequence belongs to the 'phage' integrase family. XerC subfamily. As to quaternary structure, forms a cyclic heterotetrameric complex composed of two molecules of XerC and two molecules of XerD.

It is found in the cytoplasm. Functionally, site-specific tyrosine recombinase, which acts by catalyzing the cutting and rejoining of the recombining DNA molecules. The XerC-XerD complex is essential to convert dimers of the bacterial chromosome into monomers to permit their segregation at cell division. It also contributes to the segregational stability of plasmids. This chain is Tyrosine recombinase XerC, found in Treponema denticola (strain ATCC 35405 / DSM 14222 / CIP 103919 / JCM 8153 / KCTC 15104).